A 106-amino-acid polypeptide reads, in one-letter code: L-rhamnose mutarotase (106 aa).

Tyr20 is a substrate binding site. His24 acts as the Proton donor in catalysis. Substrate contacts are provided by residues Tyr43 and 78–79 (WW).

The protein belongs to the rhamnose mutarotase family. Homodimer.

The protein localises to the cytoplasm. The catalysed reaction is alpha-L-rhamnose = beta-L-rhamnose. It functions in the pathway carbohydrate degradation; L-rhamnose degradation. In terms of biological role, involved in the anomeric conversion of L-rhamnose. The polypeptide is L-rhamnose mutarotase (rhaM) (Rhizobium leguminosarum bv. trifolii).